A 355-amino-acid chain; its full sequence is Uroporphyrinogen decarboxylase (355 aa).

Substrate is bound by residues 27 to 31 (RQAGR), D77, Y154, T209, and H327.

This sequence belongs to the uroporphyrinogen decarboxylase family. In terms of assembly, homodimer.

The protein resides in the cytoplasm. The catalysed reaction is uroporphyrinogen III + 4 H(+) = coproporphyrinogen III + 4 CO2. It functions in the pathway porphyrin-containing compound metabolism; protoporphyrin-IX biosynthesis; coproporphyrinogen-III from 5-aminolevulinate: step 4/4. Functionally, catalyzes the decarboxylation of four acetate groups of uroporphyrinogen-III to yield coproporphyrinogen-III. The chain is Uroporphyrinogen decarboxylase from Pseudoalteromonas atlantica (strain T6c / ATCC BAA-1087).